The following is a 180-amino-acid chain: ATP synthase subunit delta (180 aa).

Belongs to the ATPase delta chain family. In terms of assembly, F-type ATPases have 2 components, F(1) - the catalytic core - and F(0) - the membrane proton channel. F(1) has five subunits: alpha(3), beta(3), gamma(1), delta(1), epsilon(1). F(0) has three main subunits: a(1), b(2) and c(10-14). The alpha and beta chains form an alternating ring which encloses part of the gamma chain. F(1) is attached to F(0) by a central stalk formed by the gamma and epsilon chains, while a peripheral stalk is formed by the delta and b chains.

It localises to the cell inner membrane. F(1)F(0) ATP synthase produces ATP from ADP in the presence of a proton or sodium gradient. F-type ATPases consist of two structural domains, F(1) containing the extramembraneous catalytic core and F(0) containing the membrane proton channel, linked together by a central stalk and a peripheral stalk. During catalysis, ATP synthesis in the catalytic domain of F(1) is coupled via a rotary mechanism of the central stalk subunits to proton translocation. Functionally, this protein is part of the stalk that links CF(0) to CF(1). It either transmits conformational changes from CF(0) to CF(1) or is implicated in proton conduction. This is ATP synthase subunit delta from Paracidovorax citrulli (strain AAC00-1) (Acidovorax citrulli).